The chain runs to 519 residues: Galactan beta-1,4-galactosyltransferase GALS2 (519 aa).

The helical transmembrane segment at 28–48 (LALMALLVLCTLATLLPFLPS) threads the bilayer. A GT92 domain is found at 257–471 (DYLYCGSSLY…YHGSISQRRE (215 aa)).

It belongs to the glycosyltransferase 92 family. Expressed in the midrib of mature leaves, root vasculature, flower filaments, siliques and seeds.

Its subcellular location is the golgi apparatus membrane. Its function is as follows. Involved in the biosynthesis of beta-1,4-galactan. Beta-1,4-galactans are abundant polysaccharides in plant cell walls and are found as side-chain of rhamnogalacturonan I, which is a major component of pectin. This chain is Galactan beta-1,4-galactosyltransferase GALS2, found in Arabidopsis thaliana (Mouse-ear cress).